A 334-amino-acid polypeptide reads, in one-letter code: N-acetyl-gamma-glutamyl-phosphate reductase (334 aa).

Residue Cys154 is part of the active site.

The protein belongs to the NAGSA dehydrogenase family. Type 1 subfamily.

The protein localises to the cytoplasm. It carries out the reaction N-acetyl-L-glutamate 5-semialdehyde + phosphate + NADP(+) = N-acetyl-L-glutamyl 5-phosphate + NADPH + H(+). The protein operates within amino-acid biosynthesis; L-arginine biosynthesis; N(2)-acetyl-L-ornithine from L-glutamate: step 3/4. Catalyzes the NADPH-dependent reduction of N-acetyl-5-glutamyl phosphate to yield N-acetyl-L-glutamate 5-semialdehyde. This chain is N-acetyl-gamma-glutamyl-phosphate reductase, found in Vibrio vulnificus (strain YJ016).